A 471-amino-acid polypeptide reads, in one-letter code: Metalloprotease TIKI homolog (471 aa).

A signal peptide spans 1-24 (MAAFTLWILVLNVFLLGFQARKLA). Residues 25–449 (SNLKFPIQKC…SRKAAASCTP (425 aa)) are Extracellular-facing. N-linked (GlcNAc...) asparagine glycosylation is found at N226, N235, N284, and N342. Residues 369–402 (KAKKSLNTRRERRKGCRGRRKKSKRCQKKKKRKR) show a composition bias toward basic residues. Residues 369–406 (KAKKSLNTRRERRKGCRGRRKKSKRCQKKKKRKRPDYS) are disordered. A helical membrane pass occupies residues 450–470 (IWTVSLALTCAVTCLLTYSGF). Residue R471 is a topological domain, cytoplasmic.

It belongs to the TIKI family. Mn(2+) is required as a cofactor. Co(2+) serves as cofactor.

The protein localises to the membrane. Functionally, metalloprotease. The chain is Metalloprotease TIKI homolog from Nematostella vectensis (Starlet sea anemone).